The chain runs to 304 residues: Aspartate carbamoyltransferase catalytic subunit (304 aa).

Residues Arg-57 and Thr-58 each coordinate carbamoyl phosphate. Lys-85 is a binding site for L-aspartate. Residues Arg-107, His-134, and Gln-137 each contribute to the carbamoyl phosphate site. Positions 167 and 216 each coordinate L-aspartate. Residues Ala-260 and Pro-261 each coordinate carbamoyl phosphate.

The protein belongs to the aspartate/ornithine carbamoyltransferase superfamily. ATCase family. Heterododecamer (2C3:3R2) of six catalytic PyrB chains organized as two trimers (C3), and six regulatory PyrI chains organized as three dimers (R2).

It carries out the reaction carbamoyl phosphate + L-aspartate = N-carbamoyl-L-aspartate + phosphate + H(+). The protein operates within pyrimidine metabolism; UMP biosynthesis via de novo pathway; (S)-dihydroorotate from bicarbonate: step 2/3. Catalyzes the condensation of carbamoyl phosphate and aspartate to form carbamoyl aspartate and inorganic phosphate, the committed step in the de novo pyrimidine nucleotide biosynthesis pathway. The polypeptide is Aspartate carbamoyltransferase catalytic subunit (Fusobacterium nucleatum subsp. nucleatum (strain ATCC 25586 / DSM 15643 / BCRC 10681 / CIP 101130 / JCM 8532 / KCTC 2640 / LMG 13131 / VPI 4355)).